A 243-amino-acid chain; its full sequence is uncharacterized protein (243 aa).

A signal peptide spans 1–16 (MKLLALVALCAVGVAS). Residue Asn-55 is glycosylated (N-linked (GlcNAc...) asparagine). Disordered stretches follow at residues 95 to 126 (SQGR…EKPS) and 208 to 235 (NQQQ…KPTV). Composition is skewed to low complexity over residues 99-112 (NQQQ…SQGG) and 209-229 (QQQQ…STTL). A disulfide bridge connects residues Cys-141 and Cys-239.

This sequence belongs to the protease inhibitor I33 family.

The protein resides in the secreted. This is an uncharacterized protein from Caenorhabditis elegans.